The primary structure comprises 541 residues: Chaperonin GroEL (541 aa).

ATP contacts are provided by residues Thr29 to Pro32, Asp86 to Thr90, Gly413, Asp477 to Leu479, and Asp493.

The protein belongs to the chaperonin (HSP60) family. In terms of assembly, forms a cylinder of 14 subunits composed of two heptameric rings stacked back-to-back. Interacts with the co-chaperonin GroES.

It localises to the cytoplasm. It carries out the reaction ATP + H2O + a folded polypeptide = ADP + phosphate + an unfolded polypeptide.. Functionally, together with its co-chaperonin GroES, plays an essential role in assisting protein folding. The GroEL-GroES system forms a nano-cage that allows encapsulation of the non-native substrate proteins and provides a physical environment optimized to promote and accelerate protein folding. This chain is Chaperonin GroEL, found in Clostridium botulinum (strain 657 / Type Ba4).